Reading from the N-terminus, the 201-residue chain is 3-isopropylmalate dehydratase small subunit (201 aa).

The protein belongs to the LeuD family. LeuD type 1 subfamily. As to quaternary structure, heterodimer of LeuC and LeuD.

It carries out the reaction (2R,3S)-3-isopropylmalate = (2S)-2-isopropylmalate. It functions in the pathway amino-acid biosynthesis; L-leucine biosynthesis; L-leucine from 3-methyl-2-oxobutanoate: step 2/4. In terms of biological role, catalyzes the isomerization between 2-isopropylmalate and 3-isopropylmalate, via the formation of 2-isopropylmaleate. The polypeptide is 3-isopropylmalate dehydratase small subunit (Erwinia tasmaniensis (strain DSM 17950 / CFBP 7177 / CIP 109463 / NCPPB 4357 / Et1/99)).